The following is a 199-amino-acid chain: MKQKIVLATGNKGKVREMSDVLADFGFEVVAQTDLDIESPEETGLTFVENALLKARYAAKVSGLPAIADDSGLVVEALNGAPGLYSARYAGIDGETADAENRRKLLRDLADVPVGKRQAKFVSCIVMLRHETDPSPIIAEGECIGEIIFAEKGENGFGYDSLFFTPEKGCTFAELETVEKKKISHRARALAVLKSKLGA.

Position 9 to 14 (9 to 14 (TGNKGK)) interacts with substrate. Residues Glu41 and Asp70 each contribute to the Mg(2+) site. Catalysis depends on Asp70, which acts as the Proton acceptor. Residues Ser71, 157 to 160 (FGYD), Lys180, and 185 to 186 (HR) contribute to the substrate site.

It belongs to the HAM1 NTPase family. In terms of assembly, homodimer. The cofactor is Mg(2+).

It carries out the reaction XTP + H2O = XMP + diphosphate + H(+). It catalyses the reaction dITP + H2O = dIMP + diphosphate + H(+). The enzyme catalyses ITP + H2O = IMP + diphosphate + H(+). Pyrophosphatase that catalyzes the hydrolysis of nucleoside triphosphates to their monophosphate derivatives, with a high preference for the non-canonical purine nucleotides XTP (xanthosine triphosphate), dITP (deoxyinosine triphosphate) and ITP. Seems to function as a house-cleaning enzyme that removes non-canonical purine nucleotides from the nucleotide pool, thus preventing their incorporation into DNA/RNA and avoiding chromosomal lesions. In Mannheimia succiniciproducens (strain KCTC 0769BP / MBEL55E), this protein is dITP/XTP pyrophosphatase.